The following is a 204-amino-acid chain: Large ribosomal subunit protein uL4 (204 aa).

The tract at residues 47–69 is disordered; that stretch reads KAQKNRAAVSGGGKKPWRQKGTG.

The protein belongs to the universal ribosomal protein uL4 family. As to quaternary structure, part of the 50S ribosomal subunit.

In terms of biological role, one of the primary rRNA binding proteins, this protein initially binds near the 5'-end of the 23S rRNA. It is important during the early stages of 50S assembly. It makes multiple contacts with different domains of the 23S rRNA in the assembled 50S subunit and ribosome. Forms part of the polypeptide exit tunnel. The protein is Large ribosomal subunit protein uL4 of Teredinibacter turnerae (strain ATCC 39867 / T7901).